Reading from the N-terminus, the 572-residue chain is MRLLLVLLALIFSVVSAQQNTCAQLCKDNKDMCCSLSKNSEYLLTTHNKEEKTQSCGDKFNSEDYYVAGSNRFGCGNSVTICKVQSDDSKIEITPNRRFGHHGGGVAGSIANAASSISSVANSVSSMTNSVSSLANSVSSLAGSMSSSGSSSSSGSSGSSSSSSGSSGGGSSGGGSGGGGGGSGLVVGKERRFGKHGGGGIAGSMNSAATSLSSLASDVSSVASVVSSLSSSSSADAGSSGAQGSGSTSGDGNAPPGSTGGTGGSSGSSGGGSGGGGGGSGLVVGERKFGHHGGGGVAGSIANAASSIASVANSVSSMTNSVSSLANSVSSLAGSMSSSGSSSSSGSSGSSSSSSSSGSSGGSSGGGSSGGGSGGGGGGSGLVVGERKFGHHGGGGVAGSIANAASSIASVANSVSSMTNSVSSLANSVSSLAGSSSSSGSSGSSSSSSSSGSSGGSSGGSSGGGGGSGELLSQNQVFATCVRVISTNVGPNVDIEDKIGKPIMDASTKVCEDLFGSPYCQWTDNHIVTAVSSKLDDGFPTQGAFNVTRSQYGYIMENGHYLNNKGNSVRIN.

Positions M1 to A17 are cleaved as a signal peptide. The span at M145 to G165 shows a compositional bias: low complexity. Disordered regions lie at residues M145–G199, S231–V297, A326–K388, and A433–G469. Residues S166–L185 are compositionally biased toward gly residues. The segment covering S231–S240 has biased composition (low complexity). Residues S258 to L282 show a composition bias toward gly residues. Low complexity predominate over residues A326 to G358. The span at S359–L382 shows a compositional bias: gly residues. Residues A433–G452 are compositionally biased toward low complexity. Over residues S453–G469 the composition is skewed to gly residues.

Belongs to the dictyostelium lysozyme family.

This Dictyostelium discoideum (Social amoeba) protein is Putative lysozyme-like protein (alyL).